We begin with the raw amino-acid sequence, 620 residues long: Zinc finger protein GLIS1 (620 aa).

Positions 108–132 are disordered; the sequence is PLTGDLGGPSKRARPGPASTDSHEG. Residues 195–220 form a C2H2-type 1 zinc finger; that stretch reads QACRWVDCCAAYEQQEELVRHIEKSH. Residues 229–256 form a C2H2-type 2; atypical zinc finger; the sequence is FTCFWAGCVRRYKPFNARYKLLIHMRVH. 3 consecutive C2H2-type zinc fingers follow at residues 262-286, 292-316, and 322-346; these read NKCMFEGCSKAFSRLENLKIHLRSH, YLCQHPGCQKAFSNSSDRAKHQRTH, and YACQIPGCSKRYTDPSSLRKHVKAH. The Bipartite nuclear localization signal motif lies at 340 to 356; sequence RKHVKAHSAKEQQVRKK. The tract at residues 414-515 is disordered; that stretch reads ASGLLPPAHD…PPLPSPQGYQ (102 aa). Over residues 477–488 the composition is skewed to low complexity; that stretch reads SSQSHSPGGQPF. Residues 489–510 show a composition bias toward pro residues; sequence PTLPSKPSYPPFQSPPPPPLPS.

The protein belongs to the GLI C2H2-type zinc-finger protein family. In terms of assembly, interacts with KLF4. Interacts with POU5F1 and/or POU5F1B. Interacts with SOX2.

The protein resides in the nucleus. Functionally, acts both as a repressor and an activator of transcription. Binds to the consensus sequence 5'-GACCACCCAC-3'. By controlling the expression of genes involved in cell differentiation inhibits the lineage commitment of multipotent cells. Prevents, for instance, the differentiation of multipotent mesenchymal cells into adipocyte and osteoblast. The sequence is that of Zinc finger protein GLIS1 from Homo sapiens (Human).